The primary structure comprises 582 residues: 2-succinyl-5-enolpyruvyl-6-hydroxy-3-cyclohexene-1-carboxylate synthase (582 aa).

It belongs to the TPP enzyme family. MenD subfamily. As to quaternary structure, homodimer. Mg(2+) is required as a cofactor. Mn(2+) serves as cofactor. The cofactor is thiamine diphosphate.

It catalyses the reaction isochorismate + 2-oxoglutarate + H(+) = 5-enolpyruvoyl-6-hydroxy-2-succinyl-cyclohex-3-ene-1-carboxylate + CO2. Its pathway is quinol/quinone metabolism; 1,4-dihydroxy-2-naphthoate biosynthesis; 1,4-dihydroxy-2-naphthoate from chorismate: step 2/7. The protein operates within cofactor biosynthesis; phylloquinone biosynthesis. In terms of biological role, catalyzes the thiamine diphosphate-dependent decarboxylation of 2-oxoglutarate and the subsequent addition of the resulting succinic semialdehyde-thiamine pyrophosphate anion to isochorismate to yield 2-succinyl-5-enolpyruvyl-6-hydroxy-3-cyclohexene-1-carboxylate (SEPHCHC). The chain is 2-succinyl-5-enolpyruvyl-6-hydroxy-3-cyclohexene-1-carboxylate synthase from Prochlorococcus marinus (strain MIT 9303).